We begin with the raw amino-acid sequence, 298 residues long: Tyrosine recombinase XerC (298 aa).

In terms of domain architecture, Core-binding (CB) spans T2–V88. A Tyr recombinase domain is found at H109 to D288. Catalysis depends on residues R148, K172, H240, R243, and H266. The O-(3'-phospho-DNA)-tyrosine intermediate role is filled by Y275.

The protein belongs to the 'phage' integrase family. XerC subfamily. As to quaternary structure, forms a cyclic heterotetrameric complex composed of two molecules of XerC and two molecules of XerD, in which XerC interacts with XerD via its C-terminal region, XerD interacts with XerC via its C-terminal region and so on.

It is found in the cytoplasm. With respect to regulation, ftsK may regulate the catalytic switch between XerC and XerD in the heterotetrameric complex during the two steps of the recombination process. Site-specific tyrosine recombinase, which acts by catalyzing the cutting and rejoining of the recombining DNA molecules. Binds cooperatively to specific DNA consensus sequences that are separated from XerD binding sites by a short central region, forming the heterotetrameric XerC-XerD complex that recombines DNA substrates. The complex is essential to convert dimers of the bacterial chromosome into monomers to permit their segregation at cell division. It also contributes to the segregational stability of plasmids. In the complex XerC specifically exchanges the top DNA strands. The sequence is that of Tyrosine recombinase XerC from Escherichia coli O139:H28 (strain E24377A / ETEC).